Here is a 259-residue protein sequence, read N- to C-terminus: Protein-tyrosine phosphatase RolB (259 aa).

Residues glycine 219–alanine 259 are disordered.

It carries out the reaction O-phospho-L-tyrosyl-[protein] + H2O = L-tyrosyl-[protein] + phosphate. Its function is as follows. Induces differentiation and growth of neoplastic roots (hairy roots). Seems to function as a tyrosine phosphatase. The chain is Protein-tyrosine phosphatase RolB (rolB) from Rhizobium rhizogenes (Agrobacterium rhizogenes).